Reading from the N-terminus, the 327-residue chain is Beta-ketoacyl-[acyl-carrier-protein] synthase III 2 (327 aa).

Catalysis depends on residues Cys-114 and His-251. The segment at 252 to 256 is ACP-binding; that stretch reads SANLR. The active site involves Asn-281.

The protein belongs to the thiolase-like superfamily. FabH family. As to quaternary structure, homodimer.

The protein resides in the cytoplasm. The enzyme catalyses malonyl-[ACP] + acetyl-CoA + H(+) = 3-oxobutanoyl-[ACP] + CO2 + CoA. It participates in lipid metabolism; fatty acid biosynthesis. Catalyzes the condensation reaction of fatty acid synthesis by the addition to an acyl acceptor of two carbons from malonyl-ACP. Catalyzes the first condensation reaction which initiates fatty acid synthesis and may therefore play a role in governing the total rate of fatty acid production. Possesses both acetoacetyl-ACP synthase and acetyl transacylase activities. Its substrate specificity determines the biosynthesis of branched-chain and/or straight-chain of fatty acids. This chain is Beta-ketoacyl-[acyl-carrier-protein] synthase III 2, found in Bacillus cereus (strain ATCC 14579 / DSM 31 / CCUG 7414 / JCM 2152 / NBRC 15305 / NCIMB 9373 / NCTC 2599 / NRRL B-3711).